We begin with the raw amino-acid sequence, 62 residues long: Photosystem II reaction center protein Z (62 aa).

The next 2 membrane-spanning stretches (helical) occupy residues 8–28 (LVLLLITLSTILVVGVPVVLA) and 41–61 (YTGAGLWTGLVIVTSLVNSLV).

The protein belongs to the PsbZ family. PSII is composed of 1 copy each of membrane proteins PsbA, PsbB, PsbC, PsbD, PsbE, PsbF, PsbH, PsbI, PsbJ, PsbK, PsbL, PsbM, PsbT, PsbX, PsbY, PsbZ, Psb30/Ycf12, at least 3 peripheral proteins of the oxygen-evolving complex and a large number of cofactors. It forms dimeric complexes.

The protein resides in the plastid. Its subcellular location is the chloroplast thylakoid membrane. Its function is as follows. May control the interaction of photosystem II (PSII) cores with the light-harvesting antenna, regulates electron flow through the 2 photosystem reaction centers. PSII is a light-driven water plastoquinone oxidoreductase, using light energy to abstract electrons from H(2)O, generating a proton gradient subsequently used for ATP formation. The protein is Photosystem II reaction center protein Z of Porphyra purpurea (Red seaweed).